The primary structure comprises 413 residues: 2,3-diketo-5-methylthiopentyl-1-phosphate enolase (413 aa).

Lysine 98 (proton acceptor) is an active-site residue. Substrate contacts are provided by residues lysine 147, 173–176 (KDDE), histidine 264, glycine 337, and 359–360 (GG). Lysine 173, aspartate 175, and glutamate 176 together coordinate Mg(2+). An N6-carboxylysine modification is found at lysine 173.

The protein belongs to the RuBisCO large chain family. Type IV subfamily. As to quaternary structure, homodimer. It depends on Mg(2+) as a cofactor.

It carries out the reaction 5-methylsulfanyl-2,3-dioxopentyl phosphate = 2-hydroxy-5-methylsulfanyl-3-oxopent-1-enyl phosphate. It participates in amino-acid biosynthesis; L-methionine biosynthesis via salvage pathway; L-methionine from S-methyl-5-thio-alpha-D-ribose 1-phosphate: step 3/6. Functionally, catalyzes the enolization of 2,3-diketo-5-methylthiopentyl-1-phosphate (DK-MTP-1-P) into 2-hydroxy-3-keto-5-methylthiopentenyl-1-phosphate (HK-MTPenyl-1-P). This chain is 2,3-diketo-5-methylthiopentyl-1-phosphate enolase (mtnW), found in Geobacillus kaustophilus (strain HTA426).